We begin with the raw amino-acid sequence, 384 residues long: H-2 class I histocompatibility antigen, TLA(B) alpha chain (384 aa).

The first 26 residues, 1–26 (MRMGTPVPGTLLILLAASQGQTQTCP), serve as a signal peptide directing secretion. Positions 27 to 116 (GSHSLRYFYT…MLDYYNLSQN (90 aa)) are alpha-1. The Extracellular segment spans residues 27-314 (GSHSLRYFYT…TSMPNRTTVR (288 aa)). 3 N-linked (GlcNAc...) asparagine glycosylation sites follow: Asn63, Asn112, and Asn116. The interval 117 to 208 (GSHTIQVMYG…ENRKKTQECT (92 aa)) is alpha-2. 2 disulfide bridges follow: Cys127/Cys190 and Cys229/Cys285. Positions 209 to 300 (DPPKTHVTHH…GLPEPLTLRW (92 aa)) are alpha-3. Positions 211-299 (PKTHVTHHPR…EGLPEPLTLR (89 aa)) constitute an Ig-like C1-type domain. Residues 301–314 (EPPQTSMPNRTTVR) form a connecting peptide region. Asn309 carries N-linked (GlcNAc...) asparagine glycosylation. The chain crosses the membrane as a helical span at residues 315-334 (ALLGAMIILGFMSGSVMMWM). Residues 335-384 (RKNNGGNGDDNTAAYQNEREHLSLDPRAESEALGVEAGMKDLPSAPPLVS) lie on the Cytoplasmic side of the membrane. The segment covering 354-364 (EHLSLDPRAES) has biased composition (basic and acidic residues). Positions 354–384 (EHLSLDPRAESEALGVEAGMKDLPSAPPLVS) are disordered.

This sequence belongs to the MHC class I family. In terms of assembly, heterodimer of an alpha chain and a beta chain (beta-2-microglobulin). In terms of tissue distribution, TL antigens are only expressed on thymocytes, activated T-lymphocytes and on some thymic leukemias.

The protein resides in the membrane. Its function is as follows. Involved in the presentation of foreign antigens to the immune system. The chain is H-2 class I histocompatibility antigen, TLA(B) alpha chain (H2-T3) from Mus musculus (Mouse).